An 810-amino-acid polypeptide reads, in one-letter code: Sister chromatid cohesion 1 protein 2 (810 aa).

3 disordered regions span residues 200 to 244 (RDTT…LLEP), 273 to 315 (SHES…SECG), and 606 to 626 (MGAS…AETP). Basic and acidic residues-rich tracts occupy residues 220 to 234 (EPSR…HRED) and 273 to 310 (SHES…DRSL). Residues 606–622 (MGASSTTSGTAHQTENA) are compositionally biased toward polar residues.

It belongs to the rad21 family. As to quaternary structure, component of the cohesin complex. Low expression in shoots, buds, siliques, leaves and roots. Found in, but not limited to, actively dividing cells: in procambium, protoderm and ground meristem in roots, and in shoot and floral meristems.

The protein resides in the nucleus. May be involved in sister chromatid cohesion during mitosis. The protein is Sister chromatid cohesion 1 protein 2 (SYN2) of Arabidopsis thaliana (Mouse-ear cress).